The sequence spans 528 residues: Membrane protein insertase YidC (528 aa).

4 helical membrane-spanning segments follow: residues 5 to 25 (VVIA…IFPP), 346 to 366 (YGIA…PLTH), 416 to 436 (LPMI…MFSI), and 486 to 506 (MLAL…GLVL).

It belongs to the OXA1/ALB3/YidC family. Type 1 subfamily. In terms of assembly, interacts with the Sec translocase complex via SecD. Specifically interacts with transmembrane segments of nascent integral membrane proteins during membrane integration.

Its subcellular location is the cell inner membrane. Required for the insertion and/or proper folding and/or complex formation of integral membrane proteins into the membrane. Involved in integration of membrane proteins that insert both dependently and independently of the Sec translocase complex, as well as at least some lipoproteins. Aids folding of multispanning membrane proteins. This Geotalea uraniireducens (strain Rf4) (Geobacter uraniireducens) protein is Membrane protein insertase YidC.